Here is a 449-residue protein sequence, read N- to C-terminus: Putative recombination initiation defects 3 (449 aa).

Residues 21-56 (LRRSAEPQASQQLRSQQSQQSFSQGPSSSQRGCGGF) form a disordered region. A compositionally biased stretch (low complexity) spans 28–50 (QASQQLRSQQSQQSFSQGPSSSQ). Positions 437 to 441 (RTKRK) match the Nuclear localization signal motif.

In terms of assembly, interacts with PRD1; this interaction facilitates a binding to DFO.

The protein resides in the nucleus. In terms of biological role, involved in DNA cleavage that forms the double-strand breaks (DSB) that initiate meiotic recombination. The chain is Putative recombination initiation defects 3 from Arabidopsis thaliana (Mouse-ear cress).